Reading from the N-terminus, the 545-residue chain is CTP synthase (545 aa).

The amidoligase domain stretch occupies residues 1–265; that stretch reads MSRFIFVTGG…DAIVVEKFGL (265 aa). Ser-13 provides a ligand contact to CTP. Ser-13 serves as a coordination point for UTP. Residue 14-19 coordinates ATP; that stretch reads SLGKGI. An L-glutamine-binding site is contributed by Tyr-54. Residue Asp-71 coordinates ATP. 2 residues coordinate Mg(2+): Asp-71 and Glu-139. CTP-binding positions include 146–148, 186–191, and Lys-222; these read DIE and KTKPTQ. Residues 186–191 and Lys-222 each bind UTP; that span reads KTKPTQ. Residues 290-541 enclose the Glutamine amidotransferase type-1 domain; that stretch reads TVGMVGKYIE…VAAALAEQKA (252 aa). Gly-351 contributes to the L-glutamine binding site. Residue Cys-378 is the Nucleophile; for glutamine hydrolysis of the active site. L-glutamine-binding positions include 379–382, Glu-402, and Arg-469; that span reads LGMQ. Catalysis depends on residues His-514 and Glu-516.

It belongs to the CTP synthase family. Homotetramer.

The catalysed reaction is UTP + L-glutamine + ATP + H2O = CTP + L-glutamate + ADP + phosphate + 2 H(+). It catalyses the reaction L-glutamine + H2O = L-glutamate + NH4(+). The enzyme catalyses UTP + NH4(+) + ATP = CTP + ADP + phosphate + 2 H(+). It participates in pyrimidine metabolism; CTP biosynthesis via de novo pathway; CTP from UDP: step 2/2. With respect to regulation, allosterically activated by GTP, when glutamine is the substrate; GTP has no effect on the reaction when ammonia is the substrate. The allosteric effector GTP functions by stabilizing the protein conformation that binds the tetrahedral intermediate(s) formed during glutamine hydrolysis. Inhibited by the product CTP, via allosteric rather than competitive inhibition. Functionally, catalyzes the ATP-dependent amination of UTP to CTP with either L-glutamine or ammonia as the source of nitrogen. Regulates intracellular CTP levels through interactions with the four ribonucleotide triphosphates. The protein is CTP synthase of Alcanivorax borkumensis (strain ATCC 700651 / DSM 11573 / NCIMB 13689 / SK2).